The chain runs to 267 residues: GTP cyclohydrolase FolE2 (267 aa).

This sequence belongs to the GTP cyclohydrolase IV family.

The catalysed reaction is GTP + H2O = 7,8-dihydroneopterin 3'-triphosphate + formate + H(+). The protein operates within cofactor biosynthesis; 7,8-dihydroneopterin triphosphate biosynthesis; 7,8-dihydroneopterin triphosphate from GTP: step 1/1. Functionally, converts GTP to 7,8-dihydroneopterin triphosphate. The sequence is that of GTP cyclohydrolase FolE2 from Cupriavidus necator (strain ATCC 17699 / DSM 428 / KCTC 22496 / NCIMB 10442 / H16 / Stanier 337) (Ralstonia eutropha).